Here is a 264-residue protein sequence, read N- to C-terminus: S-adenosylmethionine decarboxylase proenzyme (264 aa).

S111 (schiff-base intermediate with substrate; via pyruvic acid) is an active-site residue. The residue at position 111 (S111) is a Pyruvic acid (Ser); by autocatalysis. H116 (proton acceptor; for processing activity) is an active-site residue. The Proton donor; for catalytic activity role is filled by C139.

This sequence belongs to the prokaryotic AdoMetDC family. Type 2 subfamily. Heterooctamer of four alpha and four beta chains arranged as a tetramer of alpha/beta heterodimers. Pyruvate is required as a cofactor. In terms of processing, is synthesized initially as an inactive proenzyme. Formation of the active enzyme involves a self-maturation process in which the active site pyruvoyl group is generated from an internal serine residue via an autocatalytic post-translational modification. Two non-identical subunits are generated from the proenzyme in this reaction, and the pyruvate is formed at the N-terminus of the alpha chain, which is derived from the carboxyl end of the proenzyme. The post-translation cleavage follows an unusual pathway, termed non-hydrolytic serinolysis, in which the side chain hydroxyl group of the serine supplies its oxygen atom to form the C-terminus of the beta chain, while the remainder of the serine residue undergoes an oxidative deamination to produce ammonia and the pyruvoyl group blocking the N-terminus of the alpha chain.

The catalysed reaction is S-adenosyl-L-methionine + H(+) = S-adenosyl 3-(methylsulfanyl)propylamine + CO2. Its pathway is amine and polyamine biosynthesis; S-adenosylmethioninamine biosynthesis; S-adenosylmethioninamine from S-adenosyl-L-methionine: step 1/1. Catalyzes the decarboxylation of S-adenosylmethionine to S-adenosylmethioninamine (dcAdoMet), the propylamine donor required for the synthesis of the polyamines spermine and spermidine from the diamine putrescine. The sequence is that of S-adenosylmethionine decarboxylase proenzyme from Geobacillus thermodenitrificans (strain NG80-2).